The sequence spans 206 residues: Ribosomal RNA large subunit methyltransferase E (206 aa).

The S-adenosyl-L-methionine site is built by Gly60, Trp62, Asp80, Asp96, and Asp121. The active-site Proton acceptor is the Lys161.

The protein belongs to the class I-like SAM-binding methyltransferase superfamily. RNA methyltransferase RlmE family.

The protein resides in the cytoplasm. The enzyme catalyses uridine(2552) in 23S rRNA + S-adenosyl-L-methionine = 2'-O-methyluridine(2552) in 23S rRNA + S-adenosyl-L-homocysteine + H(+). Specifically methylates the uridine in position 2552 of 23S rRNA at the 2'-O position of the ribose in the fully assembled 50S ribosomal subunit. The polypeptide is Ribosomal RNA large subunit methyltransferase E (Francisella tularensis subsp. novicida (strain U112)).